Here is a 468-residue protein sequence, read N- to C-terminus: Glutamate--tRNA ligase (468 aa).

Positions proline 8–glycine 18 match the 'HIGH' region motif. 4 residues coordinate Zn(2+): cysteine 97, cysteine 99, cysteine 124, and aspartate 126. The short motif at lysine 236–arginine 240 is the 'KMSKS' region element. Residue lysine 239 participates in ATP binding.

This sequence belongs to the class-I aminoacyl-tRNA synthetase family. Glutamate--tRNA ligase type 1 subfamily. Monomer. Requires Zn(2+) as cofactor.

It is found in the cytoplasm. It catalyses the reaction tRNA(Glu) + L-glutamate + ATP = L-glutamyl-tRNA(Glu) + AMP + diphosphate. Catalyzes the attachment of glutamate to tRNA(Glu) in a two-step reaction: glutamate is first activated by ATP to form Glu-AMP and then transferred to the acceptor end of tRNA(Glu). This Francisella tularensis subsp. tularensis (strain SCHU S4 / Schu 4) protein is Glutamate--tRNA ligase.